A 198-amino-acid chain; its full sequence is Recombination protein RecR (198 aa).

A C4-type zinc finger spans residues 58–73 (CKVCQTLTDKEICPIC). Positions 81 to 175 (KVIMVVENTR…KVSRIASGVP (95 aa)) constitute a Toprim domain.

The protein belongs to the RecR family.

May play a role in DNA repair. It seems to be involved in an RecBC-independent recombinational process of DNA repair. It may act with RecF and RecO. This is Recombination protein RecR from Lachnoclostridium phytofermentans (strain ATCC 700394 / DSM 18823 / ISDg) (Clostridium phytofermentans).